Here is a 496-residue protein sequence, read N- to C-terminus: Glycine receptor subunit beta (496 aa).

The first 22 residues, 1-22 (MKFSLAVSFFILMSLLFEDACS), serve as a signal peptide directing secretion. The Extracellular segment spans residues 23-268 (KEKSSKKGKG…IFTLRRQVGF (246 aa)). A glycan (N-linked (GlcNAc...) asparagine) is linked at asparagine 54. Residues arginine 108 and serine 174 each coordinate glycine. Cysteine 183 and cysteine 197 form a disulfide bridge. Residue asparagine 242 is glycosylated (N-linked (GlcNAc...) asparagine). Cysteine 243 and cysteine 255 form a disulfide bridge. Glycine is bound at residue threonine 250. Residues 269–289 (YMMGVYAPTLLIVVLSWLSFW) traverse the membrane as a helical segment. At 290 to 294 (INPDA) the chain is on the cytoplasmic side. Residues 295 to 315 (SAARVPLGIFSVLSLASECTT) form a helical membrane-spanning segment. Topologically, residues 316 to 327 (LAAELPKVSYVK) are extracellular. A helical transmembrane segment spans residues 328–349 (ALDVWLIACLLFGFASLVEYAV). Over 350 to 471 (VQVMLNNPKR…KPVIPTAAKR (122 aa)) the chain is Cytoplasmic. Phosphothreonine is present on threonine 391. The chain crosses the membrane as a helical span at residues 472-495 (IDLYARALFPFCFLFFNVIYWSIY). Position 496 (leucine 496) is a topological domain, extracellular.

The protein belongs to the ligand-gated ion channel (TC 1.A.9) family. Glycine receptor (TC 1.A.9.3) subfamily. GLRB sub-subfamily. In terms of assembly, forms heteropentamers with glycin receptor alpha subunits. Heteropentamers with GLRA1 can be composed of two GLRA1 and three GLRB subunits, or three GLRA1 and two GLRB subunits, or four GLRA1 subunits and one GLRB subunit. Forms heteropentamers with GLRA2. Functional GLRB-GLRA2 heteropentamers contain four GLRA2 subunits and one GLRB subunit, although alternative subunit composition cannot be excluded. Forms a heteropentamer with GLRA3. Interacts with GPHN. In terms of tissue distribution, detected in spinal cord and brain stem (at protein level). Detected in spinal cord, cerebellum and brain cortex.

Its subcellular location is the postsynaptic cell membrane. The protein resides in the cell membrane. It localises to the synapse. The protein localises to the perikaryon. It is found in the cell projection. Its subcellular location is the dendrite. The protein resides in the cytoplasm. The catalysed reaction is chloride(in) = chloride(out). Channel opening is triggered by extracellular glycine. Heteropentameric channels composed of GLRB and GLRA1 are activated by lower glycine levels than homopentameric GLRA1. Functionally, subunit of heteromeric glycine-gated chloride channels. Plays an important role in the down-regulation of neuronal excitability. Contributes to the generation of inhibitory postsynaptic currents. This Rattus norvegicus (Rat) protein is Glycine receptor subunit beta (Glrb).